A 264-amino-acid chain; its full sequence is 3'-5' ssDNA/RNA exonuclease TatD (264 aa).

3 residues coordinate a divalent metal cation: E92, H128, and H153.

Belongs to the metallo-dependent hydrolases superfamily. TatD-type hydrolase family. TatD subfamily. As to quaternary structure, monomer. It depends on Mg(2+) as a cofactor.

It localises to the cytoplasm. Functionally, 3'-5' exonuclease that prefers single-stranded DNA and RNA. May play a role in the H(2)O(2)-induced DNA damage repair. In Dickeya dadantii (strain 3937) (Erwinia chrysanthemi (strain 3937)), this protein is 3'-5' ssDNA/RNA exonuclease TatD.